A 276-amino-acid polypeptide reads, in one-letter code: NH(3)-dependent NAD(+) synthetase (276 aa).

43-50 lines the ATP pocket; sequence GISGGVDS. Asp-49 provides a ligand contact to Mg(2+). Arg-146 serves as a coordination point for deamido-NAD(+). Residue Thr-166 coordinates ATP. Residue Glu-171 participates in Mg(2+) binding. The deamido-NAD(+) site is built by Lys-179 and Asp-186. Positions 195 and 217 each coordinate ATP. Position 266–267 (266–267) interacts with deamido-NAD(+); that stretch reads HK.

This sequence belongs to the NAD synthetase family. In terms of assembly, homodimer.

It catalyses the reaction deamido-NAD(+) + NH4(+) + ATP = AMP + diphosphate + NAD(+) + H(+). The protein operates within cofactor biosynthesis; NAD(+) biosynthesis; NAD(+) from deamido-NAD(+) (ammonia route): step 1/1. Its function is as follows. Catalyzes the ATP-dependent amidation of deamido-NAD to form NAD. Uses ammonia as a nitrogen source. This chain is NH(3)-dependent NAD(+) synthetase, found in Shewanella baltica (strain OS185).